Reading from the N-terminus, the 176-residue chain is Acireductone dioxygenase (176 aa).

Residues His-91, His-93, Glu-97, and His-136 each coordinate Fe(2+). Residues His-91, His-93, Glu-97, and His-136 each contribute to the Ni(2+) site.

It belongs to the acireductone dioxygenase (ARD) family. Monomer. The cofactor is Fe(2+). Ni(2+) serves as cofactor.

The enzyme catalyses 1,2-dihydroxy-5-(methylsulfanyl)pent-1-en-3-one + O2 = 3-(methylsulfanyl)propanoate + CO + formate + 2 H(+). The catalysed reaction is 1,2-dihydroxy-5-(methylsulfanyl)pent-1-en-3-one + O2 = 4-methylsulfanyl-2-oxobutanoate + formate + 2 H(+). It participates in amino-acid biosynthesis; L-methionine biosynthesis via salvage pathway; L-methionine from S-methyl-5-thio-alpha-D-ribose 1-phosphate: step 5/6. In terms of biological role, catalyzes 2 different reactions between oxygen and the acireductone 1,2-dihydroxy-3-keto-5-methylthiopentene (DHK-MTPene) depending upon the metal bound in the active site. Fe-containing acireductone dioxygenase (Fe-ARD) produces formate and 2-keto-4-methylthiobutyrate (KMTB), the alpha-ketoacid precursor of methionine in the methionine recycle pathway. Ni-containing acireductone dioxygenase (Ni-ARD) produces methylthiopropionate, carbon monoxide and formate, and does not lie on the methionine recycle pathway. This chain is Acireductone dioxygenase, found in Picosynechococcus sp. (strain ATCC 27264 / PCC 7002 / PR-6) (Agmenellum quadruplicatum).